A 554-amino-acid polypeptide reads, in one-letter code: CTP synthase (554 aa).

The tract at residues 1-265 is amidoligase domain; it reads MTPLIFVTGG…DELVIDQFKL (265 aa). Ser-13 lines the CTP pocket. Residue Ser-13 coordinates UTP. Residues 14-19 and Asp-71 contribute to the ATP site; that span reads SLGKGI. 2 residues coordinate Mg(2+): Asp-71 and Glu-139. CTP is bound by residues 146 to 148, 186 to 191, and Lys-222; these read DIE and KTKPTQ. Residues 186-191 and Lys-222 each bind UTP; that span reads KTKPTQ. The 254-residue stretch at 292–545 folds into the Glutamine amidotransferase type-1 domain; it reads TIAVVGKYVD…VRAAREKKAG (254 aa). Gly-353 is an L-glutamine binding site. Catalysis depends on Cys-380, which acts as the Nucleophile; for glutamine hydrolysis. Residues 381 to 384, Glu-404, and Arg-471 each bind L-glutamine; that span reads YGMQ. Active-site residues include His-518 and Glu-520.

It belongs to the CTP synthase family. In terms of assembly, homotetramer.

The catalysed reaction is UTP + L-glutamine + ATP + H2O = CTP + L-glutamate + ADP + phosphate + 2 H(+). It catalyses the reaction L-glutamine + H2O = L-glutamate + NH4(+). It carries out the reaction UTP + NH4(+) + ATP = CTP + ADP + phosphate + 2 H(+). It functions in the pathway pyrimidine metabolism; CTP biosynthesis via de novo pathway; CTP from UDP: step 2/2. Its activity is regulated as follows. Allosterically activated by GTP, when glutamine is the substrate; GTP has no effect on the reaction when ammonia is the substrate. The allosteric effector GTP functions by stabilizing the protein conformation that binds the tetrahedral intermediate(s) formed during glutamine hydrolysis. Inhibited by the product CTP, via allosteric rather than competitive inhibition. In terms of biological role, catalyzes the ATP-dependent amination of UTP to CTP with either L-glutamine or ammonia as the source of nitrogen. Regulates intracellular CTP levels through interactions with the four ribonucleotide triphosphates. The protein is CTP synthase of Xanthomonas campestris pv. campestris (strain 8004).